Reading from the N-terminus, the 83-residue chain is Acyl carrier protein MmaB (83 aa).

The region spanning 3–83 (DPVRQRILLA…LSQSELESPT (81 aa)) is the Carrier domain. An O-(pantetheine 4'-phosphoryl)serine modification is found at S39.

Belongs to the acyl carrier protein (ACP) family. Pantetheine 4'-phosphate is required as a cofactor.

It functions in the pathway lipid metabolism; fatty acid metabolism. In terms of biological role, acyl-carrier protein (ACP) involved in the biosynthesis of a unique class of isonitrile lipopeptides (INLPs) that seem to play a role in metal acquisition in M.marinum. Is the dedicated ACP for the loading of activated acyl groups catalyzed by MmaC. The sequence is that of Acyl carrier protein MmaB from Mycobacterium marinum (strain ATCC BAA-535 / M).